Here is a 418-residue protein sequence, read N- to C-terminus: Light-independent protochlorophyllide reductase subunit N (418 aa).

Cysteine 17, cysteine 42, and cysteine 103 together coordinate [4Fe-4S] cluster.

The protein belongs to the BchN/ChlN family. In terms of assembly, protochlorophyllide reductase is composed of three subunits; ChlL, ChlN and ChlB. Forms a heterotetramer of two ChlB and two ChlN subunits. [4Fe-4S] cluster serves as cofactor.

It carries out the reaction chlorophyllide a + oxidized 2[4Fe-4S]-[ferredoxin] + 2 ADP + 2 phosphate = protochlorophyllide a + reduced 2[4Fe-4S]-[ferredoxin] + 2 ATP + 2 H2O. The protein operates within porphyrin-containing compound metabolism; chlorophyll biosynthesis (light-independent). Functionally, component of the dark-operative protochlorophyllide reductase (DPOR) that uses Mg-ATP and reduced ferredoxin to reduce ring D of protochlorophyllide (Pchlide) to form chlorophyllide a (Chlide). This reaction is light-independent. The NB-protein (ChlN-ChlB) is the catalytic component of the complex. The chain is Light-independent protochlorophyllide reductase subunit N from Prochlorococcus marinus (strain MIT 9303).